Here is a 929-residue protein sequence, read N- to C-terminus: SED5-binding protein 3 (929 aa).

Ser-15 carries the phosphoserine modification. Residues 18–28 (ESTVHTGGASS) are compositionally biased toward polar residues. The tract at residues 18–52 (ESTVHTGGASSKKSRRPHRAYHNFSSGTVPTLGNS) is disordered. The segment covering 29-38 (KKSRRPHRAY) has biased composition (basic residues). Residues 40-52 (NFSSGTVPTLGNS) show a composition bias toward polar residues. Thr-72 is modified (phosphothreonine). Phosphoserine occurs at positions 83, 85, 94, 101, and 110. Thr-216 bears the Phosphothreonine mark. Positions 220-244 (CRRCRAYANPKFQFTYDSSVICNIC) are zinc finger-like.

The protein belongs to the SEC23/SEC24 family. SEC24 subfamily. COPII is composed of at least five proteins: the SEC23/24 complex, the SEC13/31 complex and SAR1. Binds to SED5. Interacts with GHR1.

The protein localises to the cytoplasm. It is found in the golgi apparatus membrane. Its subcellular location is the endoplasmic reticulum membrane. Its function is as follows. Component of the COPII coat, that covers ER-derived vesicles involved in transport from the endoplasmic reticulum to the Golgi apparatus. COPII acts in the cytoplasm to promote the transport of secretory, plasma membrane, and vacuolar proteins from the endoplasmic reticulum to the Golgi complex. The protein is SED5-binding protein 3 (SFB3) of Saccharomyces cerevisiae (strain ATCC 204508 / S288c) (Baker's yeast).